Reading from the N-terminus, the 410-residue chain is Mitochondrial potassium channel (410 aa).

The transit peptide at 1–35 (MTGCSPVFTMQQVVGVSHRLVWRTFRGTDLLMTRT) directs the protein to the mitochondrion. At 36–201 (LCSPGPSRPG…KERTRAERTK (166 aa)) the chain is on the mitochondrial matrix side. Positions 116-143 (VREAREDLEAQQTKLKEVRDRLDRVSRE) form a coiled coil. A helical transmembrane segment spans residues 202–222 (NWSLIGSVLGALIGVAGSTYV). Residues 223-385 (NRVRLQELKA…RLEAQANRNA (163 aa)) lie on the Mitochondrial intermembrane side of the membrane. Positions 276–296 (GQDQGSGSPTGPSSPRGKDID) are disordered. Low complexity predominate over residues 280-290 (GSGSPTGPSSP). A helical transmembrane segment spans residues 386-406 (ISSTLVTCVTFMATLPLLYML). Topologically, residues 407–410 (FKTS) are mitochondrial matrix.

In terms of assembly, the mitochondrial potassium channel (mitoK(ATP)) forms a heteromultimer.

The protein localises to the mitochondrion inner membrane. It carries out the reaction K(+)(in) = K(+)(out). With respect to regulation, channel activity inhibited by ATP via ABCB8/MITOSUR subunit. Pore-forming subunit of the mitochondrial ATP-gated potassium channel (mitoK(ATP)). Together with ATP-binding subunit ABCB8/MITOSUR of the mitoK(ATP) channel, mediates ATP-dependent K(+) currents across the mitochondrial inner membrane. An increase in ATP intracellular levels closes the channel, inhibiting K(+) transport, whereas a decrease in ATP levels enhances K(+) uptake in the mitochondrial matrix. May contribute to the homeostatic control of cellular metabolism under stress conditions by regulating the mitochondrial matrix volume. The protein is Mitochondrial potassium channel of Rattus norvegicus (Rat).